The following is a 103-amino-acid chain: Large ribosomal subunit protein uL24 (103 aa).

It belongs to the universal ribosomal protein uL24 family. In terms of assembly, part of the 50S ribosomal subunit.

One of two assembly initiator proteins, it binds directly to the 5'-end of the 23S rRNA, where it nucleates assembly of the 50S subunit. Functionally, one of the proteins that surrounds the polypeptide exit tunnel on the outside of the subunit. The polypeptide is Large ribosomal subunit protein uL24 (Pasteurella multocida (strain Pm70)).